Here is a 1012-residue protein sequence, read N- to C-terminus: Formate dehydrogenase subunit alpha (1012 aa).

The tat-type signal signal peptide spans 1–35 (MLIKRRAFLKLTAAGATLSAFGGLGVDLAPAKAQA). A 4Fe-4S Mo/W bis-MGD-type domain is found at 45–103 (AKQTTSVCCYCSVGCGLIVHTDKKTNRAINVEGDPDHPINEGSLCAKGASTWQLAENER). Positions 52, 55, 59, and 89 each coordinate [4Fe-4S] cluster. Sec-193 contributes to the W-bis(molybdopterin guanine dinucleotide) binding site. A non-standard amino acid (selenocysteine) is located at residue Sec-193. Thr-393, Lys-395, Lys-398, Leu-428, and Asn-430 together coordinate Ca(2+). An intrachain disulfide couples Cys-852 to Cys-879.

This sequence belongs to the prokaryotic molybdopterin-containing oxidoreductase family. As to quaternary structure, heterodimer of alpha (FdhA) and beta (FdhB) subunits. The cofactor is [4Fe-4S] cluster. It depends on W-bis(molybdopterin guanine dinucleotide) as a cofactor. Post-translationally, the disulfide bond is likely to be broken in the active form of this enzyme. Predicted to be exported by the Tat system. The position of the signal peptide cleavage has been experimentally proven.

Its subcellular location is the periplasm. It catalyses the reaction formate + NAD(+) = CO2 + NADH. In terms of biological role, alpha chain of the formate dehydrogenase (FDH) catalyze the reversible two-electron oxidation of formate to carbon dioxide. FDH loses activity in the presence of air, but this activity can be restored. The alpha subunit of formate dehydrogenase forms the active site. The polypeptide is Formate dehydrogenase subunit alpha (Megalodesulfovibrio gigas (Desulfovibrio gigas)).